Consider the following 250-residue polypeptide: Transmembrane ascorbate-dependent reductase CYB561 (250 aa).

Position 1 is an N-acetylmethionine (Met1). Over 1-15 the chain is Cytoplasmic; that stretch reads MEHSSASVPAALPYY. Residues 16–36 traverse the membrane as a helical segment; sequence VAFSQLLGLTVVAVTGAWLGL. In terms of domain architecture, Cytochrome b561 spans 18–219; the sequence is FSQLLGLTVV…FGVVVLYILA (202 aa). Residues 37–50 are Vesicular-facing; the sequence is YRGGIAWESSLQFN. Residues 51 to 71 form a helical membrane-spanning segment; sequence VHPLCMVIGMIFLQGDALLVY. Heme b contacts are provided by His52, Arg72, and Lys79. Residues 72-83 lie on the Cytoplasmic side of the membrane; the sequence is RVFRREAKRTTK. L-ascorbate contacts are provided by Lys79 and Lys83. The chain crosses the membrane as a helical span at residues 84-104; the sequence is ILHGLLHVFAFIIALVGLVAV. Residues His86, 115-118, and His120 each bind heme b; that span reads DLYS. At 105–123 the chain is on the vesicular side; the sequence is FDYHKKKGYADLYSLHSWC. The chain crosses the membrane as a helical span at residues 124 to 144; sequence GILVFVLYFVQWLVGFSFFLF. The Cytoplasmic portion of the chain corresponds to 145 to 157; the sequence is PGASFSLRSRYRP. Residue Arg152 coordinates L-ascorbate. A helical membrane pass occupies residues 158 to 178; sequence QHIFFGATIFLFSVGTALLGL. His159 and Glu180 together coordinate heme b. Over 179–197 the chain is Vesicular; that stretch reads KEALLFKLGSKYSTFEPEG. The chain crosses the membrane as a helical span at residues 198-218; sequence VLANVLGLLLVCFGVVVLYIL. Over 219–250 the chain is Cytoplasmic; sequence AQADWKRPSQAEEQALSMDFKTLTEGDSPSPQ. Lys224 is a heme b binding site. Ser246 and Ser248 each carry phosphoserine.

Heme b serves as cofactor. As to expression, abundantly distributed in a number of neuroendocrine tissues.

It localises to the cytoplasmic vesicle. The protein resides in the secretory vesicle. The protein localises to the chromaffin granule membrane. The enzyme catalyses monodehydro-L-ascorbate radical(out) + L-ascorbate(in) = monodehydro-L-ascorbate radical(in) + L-ascorbate(out). Its function is as follows. Transmembrane reductase that uses ascorbate as an electron donor in the cytoplasm and transfers electrons across membranes to reduce monodehydro-L-ascorbate radical in the lumen of secretory vesicles. It is therefore involved the regeneration and homeostasis within secretory vesicles of ascorbate which in turn provides reducing equivalents needed to support the activity of intravesicular enzymes. The sequence is that of Transmembrane ascorbate-dependent reductase CYB561 from Mus musculus (Mouse).